Consider the following 288-residue polypeptide: Pyruvate synthase subunit PorB (288 aa).

[4Fe-4S] cluster-binding residues include Cys16, Cys19, and Cys44. Positions 137-148 (STPYGASTTTSP) are enriched in polar residues. Residues 137–159 (STPYGASTTTSPHGKESFGEDRP) are disordered. The segment covering 149-159 (HGKESFGEDRP) has biased composition (basic and acidic residues). Cys208 is a binding site for [4Fe-4S] cluster.

As to quaternary structure, heterotetramer of one alpha, one beta, one delta and one gamma chain. [4Fe-4S] cluster serves as cofactor.

It carries out the reaction 2 oxidized [2Fe-2S]-[ferredoxin] + pyruvate + CoA = 2 reduced [2Fe-2S]-[ferredoxin] + acetyl-CoA + CO2 + H(+). This Methanothermobacter thermautotrophicus (strain ATCC 29096 / DSM 1053 / JCM 10044 / NBRC 100330 / Delta H) (Methanobacterium thermoautotrophicum) protein is Pyruvate synthase subunit PorB (porB).